The chain runs to 845 residues: Meiotically up-regulated gene 4 protein (845 aa).

The tract at residues 122-158 (LSTTDEQPKEPSIISISSSSSDPSSSPPPSSSLLKTP) is disordered. The span at 132-145 (PSIISISSSSSDPS) shows a compositional bias: low complexity. Residues 726-746 (FLVFLTFTGMTLFILYQLTFP) form a helical membrane-spanning segment.

The protein resides in the membrane. In terms of biological role, has a role in meiosis. This is Meiotically up-regulated gene 4 protein (mug4) from Schizosaccharomyces pombe (strain 972 / ATCC 24843) (Fission yeast).